The following is a 1117-amino-acid chain: A disintegrin and metalloproteinase with thrombospondin motifs 6 (1117 aa).

Residues 1-21 (MEILWKTLTWILSLIMASSEF) form the signal peptide. A propeptide spanning residues 22 to 244 (HSDHRLSYSS…NTHIHHRQKR (223 aa)) is cleaved from the precursor. N-linked (GlcNAc...) asparagine glycans are attached at residues asparagine 99, asparagine 172, asparagine 222, and asparagine 234. The region spanning 250–468 (RFVETLVVAD…GRGTCLDNEP (219 aa)) is the Peptidase M12B domain. Intrachain disulfides connect cysteine 326-cysteine 387, cysteine 362-cysteine 369, cysteine 381-cysteine 463, cysteine 420-cysteine 447, cysteine 490-cysteine 512, cysteine 501-cysteine 519, cysteine 507-cysteine 542, cysteine 532-cysteine 547, cysteine 570-cysteine 607, cysteine 574-cysteine 612, and cysteine 585-cysteine 597. Histidine 403 serves as a coordination point for Zn(2+). Glutamate 404 is a catalytic residue. Positions 407 and 413 each coordinate Zn(2+). In terms of domain architecture, Disintegrin spans 495 to 557 (GATSRQCKYG…VPFGTWPQSI (63 aa)). The region spanning 558 to 613 (DGGWGPWSLWGECSRTCGGGVSSSLRHCDSPAPSGGGKYCLGERKRYRSCNTDPCP) is the TSP type-1 1 domain. Residues 717 to 843 (DAIEGFFNDS…GSGDNEVGFT (127 aa)) are spacer. N-linked (GlcNAc...) asparagine glycosylation occurs at asparagine 724. 4 TSP type-1 domains span residues 840 to 900 (VGFT…EPCP), 902 to 960 (EWFI…QSCP), 962 to 1007 (QWVA…SKPP), and 1018 to 1073 (PPPR…SKCD). Disulfide bonds link cysteine 911/cysteine 954, cysteine 915/cysteine 959, and cysteine 926/cysteine 943. Residue asparagine 956 is glycosylated (N-linked (GlcNAc...) asparagine). The region spanning 1079–1117 (NTEECKDVNKVAYCPLVLKFKFCSRAYFRQMCCKTCQGH) is the PLAC domain.

Requires Zn(2+) as cofactor. In terms of processing, the precursor is cleaved by a furin endopeptidase. Glycosylated. Can be O-fucosylated by POFUT2 on a serine or a threonine residue found within the consensus sequence C1-X(2)-(S/T)-C2-G of the TSP type-1 repeat domains where C1 and C2 are the first and second cysteine residue of the repeat, respectively. Fucosylated repeats can then be further glycosylated by the addition of a beta-1,3-glucose residue by the glucosyltransferase, B3GALTL. Fucosylation mediates the efficient secretion of ADAMTS family members. Can also be C-glycosylated with one or two mannose molecules on tryptophan residues within the consensus sequence W-X-X-W of the TPRs, and N-glycosylated. These other glycosylations can also facilitate secretion. As to expression, expressed at low levels in placenta and barely detectable in a number of other tissues.

The protein resides in the secreted. Its subcellular location is the extracellular space. The protein localises to the extracellular matrix. This is A disintegrin and metalloproteinase with thrombospondin motifs 6 (ADAMTS6) from Homo sapiens (Human).